Consider the following 346-residue polypeptide: Phosphoribosylformylglycinamidine cyclo-ligase (346 aa).

This sequence belongs to the AIR synthase family.

It localises to the cytoplasm. It catalyses the reaction 2-formamido-N(1)-(5-O-phospho-beta-D-ribosyl)acetamidine + ATP = 5-amino-1-(5-phospho-beta-D-ribosyl)imidazole + ADP + phosphate + H(+). The protein operates within purine metabolism; IMP biosynthesis via de novo pathway; 5-amino-1-(5-phospho-D-ribosyl)imidazole from N(2)-formyl-N(1)-(5-phospho-D-ribosyl)glycinamide: step 2/2. In Vibrio campbellii (strain ATCC BAA-1116), this protein is Phosphoribosylformylglycinamidine cyclo-ligase.